The primary structure comprises 141 residues: Hemoglobin subunit alpha (141 aa).

The region spanning 1 to 141 (VLSEEDKSHV…VSAMLTSKYR (141 aa)) is the Globin domain. Residue His58 participates in O2 binding. Heme b is bound at residue His87.

The protein belongs to the globin family. As to quaternary structure, heterotetramer of two alpha chains and two beta chains. Red blood cells.

Its function is as follows. Involved in oxygen transport from the lung to the various peripheral tissues. This Caiman crocodilus (Spectacled caiman) protein is Hemoglobin subunit alpha (HBA).